The primary structure comprises 439 residues: Ectonucleotide pyrophosphatase/phosphodiesterase family member 7 (439 aa).

The N-terminal stretch at 1–21 (MGHSAVLLSVALVILPACVTG) is a signal peptide. The Extracellular segment spans residues 22 to 422 (GPVQRQQQHK…RSGSPLSRQH (401 aa)). Positions 38 and 74 each coordinate Zn(2+). The interval 71–77 (VTMTSPC) is required for enzyme activity. The active-site Nucleophile is the Thr74. A substrate-binding site is contributed by Asn95. Asn99, Asn120, Asn145, and Asn167 each carry an N-linked (GlcNAc...) asparagine glycan. Zn(2+) is bound by residues Asp198, His202, Asp245, and His246. N-linked (GlcNAc...) asparagine glycosylation is present at Asn266. Zn(2+) is bound at residue His352. Residues 423 to 439 (HLVVVLMGILTGLAKVV) form a helical membrane-spanning segment.

The protein belongs to the nucleotide pyrophosphatase/phosphodiesterase family. It depends on Zn(2+) as a cofactor. N-glycosylated; required for activity and transport to the plasma membrane. In terms of tissue distribution, detected in small intestine (at protein level). Highly expressed in the jejunum.

The protein resides in the cell membrane. It catalyses the reaction a sphingomyelin + H2O = phosphocholine + an N-acylsphing-4-enine + H(+). It carries out the reaction a 1-O-alkyl-2-acetyl-sn-glycero-3-phosphocholine + H2O = a 1-O-alkyl-2-acetyl-sn-glycerol + phosphocholine + H(+). The catalysed reaction is 1-O-octadecyl-2-acetyl-sn-glycero-3-phosphocholine + H2O = 1-O-octadecyl-2-acetyl-sn-glycerol + phosphocholine + H(+). The enzyme catalyses 1-hexadecanoyl-sn-glycero-3-phosphocholine + H2O = 1-hexadecanoyl-sn-glycerol + phosphocholine + H(+). Its activity is regulated as follows. platelet-activating factor hydrolysis is inhibited by higher amount of sphingomyelin. The hydrolysis of platelet-activating factor and sphingomyelin can be inhibited by the presence of sphingomyelin and platelet-activating factor respectively, the inhibition of platelet-activating factor hydrolysis by sphingomyelin being stronger. PAF hydrolysis is dose-dependently increased by both taurocholate (TC) and taurodeoxycholate (TDC). Hydrolase activity against PAF is inhibited by EDTA and stimulated by 0.1-0.25 mM Zn2+. Functionally, choline-specific phosphodiesterase that hydrolyzes sphingomyelin (SM) releasing the ceramide and phosphocholine and therefore is involved in sphingomyelin digestion, ceramide formation, and fatty acid (FA) absorption in the gastrointestinal tract. Also has phospholipase C activity and can also cleave phosphocholine from palmitoyl lyso-phosphatidylcholine and platelet-activating factor (PAF) leading to its inactivation. Does not have nucleotide pyrophosphatase activity. May promote cholesterol absorption by affecting the levels of sphingomyelin derived from either diet or endogenous sources, in the intestinal lumen. This Rattus norvegicus (Rat) protein is Ectonucleotide pyrophosphatase/phosphodiesterase family member 7.